We begin with the raw amino-acid sequence, 470 residues long: Nitric oxide synthase, inducible (470 aa).

Residues W2, Y3, and E7 each contribute to the L-arginine site. The (6R)-L-erythro-5,6,7,8-tetrahydrobiopterin site is built by R11, W93, and F106. Y121 serves as a coordination point for heme b. Residues 145-165 (FKAVARAALFSSTLMSRVLAN) form a calmodulin-binding region. The Flavodoxin-like domain maps to 169–307 (CTVLYATETG…AFSAWALTAL (139 aa)). Positions 175, 176, 177, 179, 180, 221, 222, 258, 265, 291, and 295 each coordinate FMN. R380 provides a ligand contact to NADP(+). Position 403 (H403) interacts with FAD. T440 serves as a coordination point for NADP(+).

Belongs to the NOS family. In terms of assembly, homodimer. It depends on heme b as a cofactor. Requires FAD as cofactor. The cofactor is FMN. (6R)-L-erythro-5,6,7,8-tetrahydrobiopterin serves as cofactor.

It localises to the cytoplasm. The protein localises to the cytosol. The enzyme catalyses 2 L-arginine + 3 NADPH + 4 O2 + H(+) = 2 L-citrulline + 2 nitric oxide + 3 NADP(+) + 4 H2O. With respect to regulation, not stimulated by calcium/calmodulin. Functionally, produces nitric oxide (NO) which is a messenger molecule with diverse functions throughout the body. In macrophages, NO mediates tumoricidal and bactericidal actions. Also has nitrosylase activity and mediates cysteine S-nitrosylation of cytoplasmic target proteins such COX2. This chain is Nitric oxide synthase, inducible (nos2), found in Oncorhynchus mykiss (Rainbow trout).